The primary structure comprises 91 residues: Transcription factor znf27 (91 aa).

It localises to the nucleus. Its function is as follows. Transcription factor; part of the gene cluster 27 that mediates the biosynthesis of asparasone A, a sclerotium-specific anthraquinone pigment important for sclerotial survival. Controls the expression of the non-reducing polyketide synthase (NRPKS) pks27. The protein is Transcription factor znf27 of Aspergillus flavus (strain ATCC 200026 / FGSC A1120 / IAM 13836 / NRRL 3357 / JCM 12722 / SRRC 167).